We begin with the raw amino-acid sequence, 407 residues long: Cysteine desulfurase (407 aa).

Position 226 is an N6-(pyridoxal phosphate)lysine (lysine 226). Catalysis depends on cysteine 364, which acts as the Cysteine persulfide intermediate.

This sequence belongs to the class-V pyridoxal-phosphate-dependent aminotransferase family. Csd subfamily. Homodimer. Interacts with SufE and the SufBCD complex composed of SufB, SufC and SufD. The interaction with SufE is required to mediate the direct transfer of the sulfur atom from the S-sulfanylcysteine. Requires pyridoxal 5'-phosphate as cofactor.

It localises to the cytoplasm. It catalyses the reaction (sulfur carrier)-H + L-cysteine = (sulfur carrier)-SH + L-alanine. The catalysed reaction is L-selenocysteine + AH2 = hydrogenselenide + L-alanine + A + H(+). The protein operates within cofactor biosynthesis; iron-sulfur cluster biosynthesis. Functionally, cysteine desulfurases mobilize the sulfur from L-cysteine to yield L-alanine, an essential step in sulfur metabolism for biosynthesis of a variety of sulfur-containing biomolecules. Component of the suf operon, which is activated and required under specific conditions such as oxidative stress and iron limitation. Acts as a potent selenocysteine lyase in vitro, that mobilizes selenium from L-selenocysteine. Selenocysteine lyase activity is however unsure in vivo. This is Cysteine desulfurase from Pectobacterium carotovorum subsp. carotovorum (strain PC1).